The sequence spans 413 residues: Tryptophan synthase beta chain (413 aa).

K106 carries the N6-(pyridoxal phosphate)lysine modification.

This sequence belongs to the TrpB family. Tetramer of two alpha and two beta chains. Requires pyridoxal 5'-phosphate as cofactor.

The catalysed reaction is (1S,2R)-1-C-(indol-3-yl)glycerol 3-phosphate + L-serine = D-glyceraldehyde 3-phosphate + L-tryptophan + H2O. Its pathway is amino-acid biosynthesis; L-tryptophan biosynthesis; L-tryptophan from chorismate: step 5/5. In terms of biological role, the beta subunit is responsible for the synthesis of L-tryptophan from indole and L-serine. In Methylobacterium radiotolerans (strain ATCC 27329 / DSM 1819 / JCM 2831 / NBRC 15690 / NCIMB 10815 / 0-1), this protein is Tryptophan synthase beta chain.